The primary structure comprises 57 residues: MPITCGDIPRLICSVIIPPVGVFFQVGCTKDLAINCLLTVLGYIPGVIHAVYILIKE.

2 helical membrane passes run Ile-8–Cys-28 and Ile-34–Leu-54.

The protein belongs to the UPF0057 (PMP3) family.

It is found in the membrane. This Phytophthora infestans (Potato late blight agent) protein is Protein Ric1 (RIC1).